A 227-amino-acid polypeptide reads, in one-letter code: MAHPLQLGLQDASSPIMEELLYFHDHALMIVFLISSLVLYTISLMLTTKLMHTSTMNAQMVETMWTILPAVILTSIALPSLRILYMTDEINNPLLTIKAMGHQWYWSYEYTDYTDLNFDSYMTPTLDLKPGELRLLEVDNRTVLPMETPIRMLISSEDVLHSWAVPSLGLKTDAIPGRLNQTTLSATRPGLFYGQCSEICGSNHSFMPIVLELVPLKHFETWSTLTS.

Over 1–14 the chain is Mitochondrial intermembrane; it reads MAHPLQLGLQDASS. Residues 15 to 45 form a helical membrane-spanning segment; that stretch reads PIMEELLYFHDHALMIVFLISSLVLYTISLM. At 46 to 59 the chain is on the mitochondrial matrix side; it reads LTTKLMHTSTMNAQ. Residues 60–87 form a helical membrane-spanning segment; it reads MVETMWTILPAVILTSIALPSLRILYMT. At 88–227 the chain is on the mitochondrial intermembrane side; sequence DEINNPLLTI…HFETWSTLTS (140 aa). Positions 161, 196, 198, 200, 204, and 207 each coordinate Cu cation. Residue Glu198 participates in Mg(2+) binding.

Belongs to the cytochrome c oxidase subunit 2 family. As to quaternary structure, component of the cytochrome c oxidase (complex IV, CIV), a multisubunit enzyme composed of 14 subunits. The complex is composed of a catalytic core of 3 subunits MT-CO1, MT-CO2 and MT-CO3, encoded in the mitochondrial DNA, and 11 supernumerary subunits COX4I, COX5A, COX5B, COX6A, COX6B, COX6C, COX7A, COX7B, COX7C, COX8 and NDUFA4, which are encoded in the nuclear genome. The complex exists as a monomer or a dimer and forms supercomplexes (SCs) in the inner mitochondrial membrane with NADH-ubiquinone oxidoreductase (complex I, CI) and ubiquinol-cytochrome c oxidoreductase (cytochrome b-c1 complex, complex III, CIII), resulting in different assemblies (supercomplex SCI(1)III(2)IV(1) and megacomplex MCI(2)III(2)IV(2)). Found in a complex with TMEM177, COA6, COX18, COX20, SCO1 and SCO2. Interacts with TMEM177 in a COX20-dependent manner. Interacts with COX20. Interacts with COX16. Cu cation is required as a cofactor.

The protein localises to the mitochondrion inner membrane. The enzyme catalyses 4 Fe(II)-[cytochrome c] + O2 + 8 H(+)(in) = 4 Fe(III)-[cytochrome c] + 2 H2O + 4 H(+)(out). Component of the cytochrome c oxidase, the last enzyme in the mitochondrial electron transport chain which drives oxidative phosphorylation. The respiratory chain contains 3 multisubunit complexes succinate dehydrogenase (complex II, CII), ubiquinol-cytochrome c oxidoreductase (cytochrome b-c1 complex, complex III, CIII) and cytochrome c oxidase (complex IV, CIV), that cooperate to transfer electrons derived from NADH and succinate to molecular oxygen, creating an electrochemical gradient over the inner membrane that drives transmembrane transport and the ATP synthase. Cytochrome c oxidase is the component of the respiratory chain that catalyzes the reduction of oxygen to water. Electrons originating from reduced cytochrome c in the intermembrane space (IMS) are transferred via the dinuclear copper A center (CU(A)) of subunit 2 and heme A of subunit 1 to the active site in subunit 1, a binuclear center (BNC) formed by heme A3 and copper B (CU(B)). The BNC reduces molecular oxygen to 2 water molecules using 4 electrons from cytochrome c in the IMS and 4 protons from the mitochondrial matrix. This chain is Cytochrome c oxidase subunit 2 (MT-CO2), found in Galeopterus variegatus (Malayan flying lemur).